The primary structure comprises 197 residues: RNA pyrophosphohydrolase (197 aa).

In terms of domain architecture, Nudix hydrolase spans 6 to 150 (GYRPNVGIVI…KRDVYRKVMR (145 aa)). The Nudix box motif lies at 38–59 (GGINEGENIETAMYRELYEEVG).

The protein belongs to the Nudix hydrolase family. RppH subfamily. A divalent metal cation is required as a cofactor.

In terms of biological role, accelerates the degradation of transcripts by removing pyrophosphate from the 5'-end of triphosphorylated RNA, leading to a more labile monophosphorylated state that can stimulate subsequent ribonuclease cleavage. In Haemophilus ducreyi (strain 35000HP / ATCC 700724), this protein is RNA pyrophosphohydrolase.